A 316-amino-acid polypeptide reads, in one-letter code: Methionyl-tRNA formyltransferase (316 aa).

(6S)-5,6,7,8-tetrahydrofolate is bound at residue 111–114 (GLLP).

The protein belongs to the Fmt family.

It catalyses the reaction L-methionyl-tRNA(fMet) + (6R)-10-formyltetrahydrofolate = N-formyl-L-methionyl-tRNA(fMet) + (6S)-5,6,7,8-tetrahydrofolate + H(+). In terms of biological role, attaches a formyl group to the free amino group of methionyl-tRNA(fMet). The formyl group appears to play a dual role in the initiator identity of N-formylmethionyl-tRNA by promoting its recognition by IF2 and preventing the misappropriation of this tRNA by the elongation apparatus. The protein is Methionyl-tRNA formyltransferase of Chlamydia trachomatis serovar A (strain ATCC VR-571B / DSM 19440 / HAR-13).